The following is a 513-amino-acid chain: OBERON-like protein (513 aa).

The segment at 166–235 adopts a PHD-type zinc-finger fold; that stretch reads NGFCNLCMCV…VFRCQACSXT (70 aa). Residues 372–469 are a coiled coil; sequence RELADKAREA…LYEKIKLQES (98 aa). The segment at 493-513 is disordered; sequence YNGPPKADSQSNDCHPFRTNP. The segment covering 500–513 has biased composition (polar residues); sequence DSQSNDCHPFRTNP.

In terms of assembly, self-interacts and probably forms heteromers. Binds to VPg of pea seed borne mosaic virus (PSbMV), turnip mosaic virus (TuMV) and lettuce mosaic virus (LMV), but not with VPg of tobacco etch virus (TEV), cowpea mosaic virus (CPMV), tomato black ring virus (TBRV) and grapevine fan leaf virus (GFLV).

The protein localises to the nucleus. Its function is as follows. Required for the maintenance and/or establishment of both the shoot and root meristems, probably by controlling the expression of the meristem genes and of genes required for auxin responses. Involved in the development of the basal pole and in auxin-mediated root and vascular development in the embryo. Confers sensitivity to turnip mosaic virus (TuMV) probably by promoting viral movement and multiplication via interaction with TuMV VPg. The sequence is that of OBERON-like protein (PVIP) from Pisum sativum (Garden pea).